The primary structure comprises 108 residues: UPF0060 membrane protein YnfA (108 aa).

Residues 1–5 lie on the Periplasmic side of the membrane; the sequence is MIKTT. A helical membrane pass occupies residues 6–26; that stretch reads LLFFATALCEIIGCFLPWLWL. At 27 to 30 the chain is on the cytoplasmic side; sequence KRNA. Residues 31–51 form a helical membrane-spanning segment; sequence SIWLLLPAGISLALFVWLLTL. The Periplasmic portion of the chain corresponds to 52 to 60; the sequence is HPAASGRVY. The helical transmembrane segment at 61-81 threads the bilayer; that stretch reads AAYGGVYVCTALMWLRVVDGV. Residues 82-84 lie on the Cytoplasmic side of the membrane; it reads KLT. A helical transmembrane segment spans residues 85–105; the sequence is LYDWTGPLIALCGMLIIVVGW. Residues 106–108 are Periplasmic-facing; the sequence is GRT.

This sequence belongs to the UPF0060 family.

It localises to the cell inner membrane. This Escherichia coli O157:H7 protein is UPF0060 membrane protein YnfA.